The primary structure comprises 287 residues: MSANEQWDIVSGVGITALAVAVARARESRRDDRLIDDPYAEPLIRAAQPPVPMSGDGGEAGALWHEMTDYVSVRSRFFDEWFARACAAGTRQAVVLASGLDTRAFRLEWPEGFRVFEIDQPKVLEFKDGTLAAEGVRASCERHAVAVDLRDDWASALVKAGFDPALPTAWLAEGLLPYLPPEAEANLLATVHDLSARGSRIAIESIALARSALLGADLDDTAREWGIDLKGLFSLEDRPDPGDVLAQRGWRVHRDPVGDLAAGFRRPLSDRAQQLGAAGEMVTAQRD.

Residues Asp-119 and 148-149 each bind S-adenosyl-L-methionine; that span reads DL.

The protein belongs to the UPF0677 family.

Its function is as follows. Exhibits S-adenosyl-L-methionine-dependent methyltransferase activity. The chain is Putative S-adenosyl-L-methionine-dependent methyltransferase SACE_1742 from Saccharopolyspora erythraea (strain ATCC 11635 / DSM 40517 / JCM 4748 / NBRC 13426 / NCIMB 8594 / NRRL 2338).